Here is a 700-residue protein sequence, read N- to C-terminus: Elongation factor G (700 aa).

Positions Asn-10–Leu-286 constitute a tr-type G domain. GTP contacts are provided by residues Ala-19–Thr-26, Asp-83–His-87, and Asn-137–Asp-140.

This sequence belongs to the TRAFAC class translation factor GTPase superfamily. Classic translation factor GTPase family. EF-G/EF-2 subfamily.

The protein localises to the cytoplasm. Catalyzes the GTP-dependent ribosomal translocation step during translation elongation. During this step, the ribosome changes from the pre-translocational (PRE) to the post-translocational (POST) state as the newly formed A-site-bound peptidyl-tRNA and P-site-bound deacylated tRNA move to the P and E sites, respectively. Catalyzes the coordinated movement of the two tRNA molecules, the mRNA and conformational changes in the ribosome. The polypeptide is Elongation factor G (Rhodococcus opacus (strain B4)).